The following is a 118-amino-acid chain: Nitrogenase-stabilizing/protective protein NifW (118 aa).

It belongs to the NifW family. In terms of assembly, homotrimer; associates with NifD.

Its function is as follows. May protect the nitrogenase Fe-Mo protein from oxidative damage. This Rhodopseudomonas palustris (strain BisB5) protein is Nitrogenase-stabilizing/protective protein NifW.